The primary structure comprises 351 residues: S-adenosylmethionine:tRNA ribosyltransferase-isomerase (351 aa).

This sequence belongs to the QueA family. Monomer.

It localises to the cytoplasm. The enzyme catalyses 7-aminomethyl-7-carbaguanosine(34) in tRNA + S-adenosyl-L-methionine = epoxyqueuosine(34) in tRNA + adenine + L-methionine + 2 H(+). Its pathway is tRNA modification; tRNA-queuosine biosynthesis. Functionally, transfers and isomerizes the ribose moiety from AdoMet to the 7-aminomethyl group of 7-deazaguanine (preQ1-tRNA) to give epoxyqueuosine (oQ-tRNA). In Idiomarina loihiensis (strain ATCC BAA-735 / DSM 15497 / L2-TR), this protein is S-adenosylmethionine:tRNA ribosyltransferase-isomerase.